A 396-amino-acid chain; its full sequence is Coiled-coil domain-containing protein 1 (396 aa).

A signal peptide spans 1 to 21 (MAARSALCFLAIITLFVYACG). Coiled-coil stretches lie at residues 53 to 73 (KIDS…NDRD), 109 to 129 (EVEK…DIID), 208 to 242 (DKES…ILDT), and 287 to 308 (YEEI…IDEH). Over residues 231 to 256 (DANDDVNDILDTDDEDEDEDVQEEKD) the composition is skewed to acidic residues. 2 disordered regions span residues 231–260 (DAND…EDIH) and 288–378 (EEIE…VADD).

In terms of tissue distribution, component of the acid-insoluble and acid-soluble organic matrix of calcified layers of the shell (at protein level).

The protein localises to the secreted. This chain is Coiled-coil domain-containing protein 1, found in Lottia gigantea (Giant owl limpet).